The chain runs to 117 residues: UPF0342 protein OB1136 (117 aa).

It belongs to the UPF0342 family.

In Oceanobacillus iheyensis (strain DSM 14371 / CIP 107618 / JCM 11309 / KCTC 3954 / HTE831), this protein is UPF0342 protein OB1136.